A 1357-amino-acid chain; its full sequence is Major yolk protein (1357 aa).

Residues 1–15 form the signal peptide; sequence MRAAILFCLVASSMA. Transferrin-like domains follow at residues 132–478 and 493–1101; these read VRWC…GEVY and AKIC…AIVK. N-linked (GlcNAc...) asparagine glycans are attached at residues Asn-198, Asn-227, Asn-304, Asn-310, Asn-402, Asn-499, Asn-530, Asn-541, Asn-572, Asn-578, Asn-625, Asn-639, Asn-692, Asn-732, Asn-741, Asn-1035, Asn-1043, Asn-1081, Asn-1128, Asn-1208, Asn-1241, and Asn-1258.

The protein belongs to the transferrin family. As to expression, synthesized in the intestines of the females and males and also in ovaries and testis.

The protein resides in the secreted. In terms of biological role, may serve the following two functions: a classical role as a yolk protein precursor and probably shuttle iron to developing germ cells. The chain is Major yolk protein from Strongylocentrotus purpuratus (Purple sea urchin).